The sequence spans 1375 residues: MRDLLNFFDKPKDPLSFDAVRVSLASPEMIREWSFGEVKKPETINYRTFKPERDGLFCAKIFGPIKDYECLCGKYKRMKYRGVVCEKCGVEVTQTKVRRERLGHIELATPVAHIWFLRSLPSRIGNLLNLSLKDVEKVLYCEAHVVIDPMETTLEEGQVLTEEALQAALNEFGPSFKYGMGGEAVRDLLKKIDPEYLSRKLRLEVKDTKSEAGIKKLTKRLRVVEAFKGSINKPEWMMLEALPVLPPDLRPLVPLDGGRFATSDLNDLYRRVINRNNRLKRLQELNAPDIIIRNEKRMLQEAVDALLDNGRRGKTFTGPNKRPLRSLSDMLKGKQGRFRQNLLGKRVDYSGRSVITVGPTLRLHQCGLPKKMALELFKPFVYNKLEEKGLATTIKQAKRLVDQETVEVWDILADVVKEHPVLLNRAPTLHRLGIQAFEPVLHEGKAIQLHPLVCTAFNADFDGDQMAVHVPLSVESQVEARVLMMSTNNILSPANGKPIINPSQDIVLGMYWLTRMRPGAKGSGKAFSSVQEAQYAFETGLVDLQAVCKVRINGTLQETTVGRAILSDIVPKEVPFNEVNVTMGKKQIAALIDKTFRLAGAKATCILADKIMEYGFKYSTAAGMSIGIDDMVIPAAKAPMIADAEKQVTEIQQQYDEGLITDGERYNKVVDIWAQTADKIAKEGMNAIEKQTFNVNGKEVVGPSFNPIYIMADSGARGSAAQIRQLGGMRGLMAKPSGEIIETPITANFREGLTVIQYFISTHGARKGLADTALKTANSGYLTRRLVDVAQDVVVSEIDCGVEDGLEITPIYEAGEIVQNIGDRILGRTALKDVVDAATNEVVVRANQEITENDVKIIEGRGIDKVDIRSALICQSKRGVCVKCYGRDLSRGATVNLGETVGIIAAQSIGEPGTQLTMRTFHLGGAASRAVEQSVHTSRYDGVVKLQNVHAVTNRNGKLTVMNRNGSALVIDEAGRERENFKLVYGAVLNFKEGDKVAKGQTVAEWDPYSNPIIAEVSAKIQYQDIEEGSTMQEQVDAVTGFATKVIMESKSSDVKPTVFLVDGAGKTLNLPGRDIPARYLIPVGAQLLVADQQEVHAGDVIAKMHREASKTKDITGGLPRVAELFEARKPKEAAIISEIDGYVTFGKDVKGKQRVIVTPEVGEQKEYLIPKGKHVAVREGEYVRAGEALMDGPTNPHDILAVLGAKALSAYLVDEIQEVYRLQGVGINDKHIEVIVRQMLRKVEIRDAGDSRFLAGEQVERYAYMEENERINKEGGQPATCSPLLLGITKVSLSTDSWISAASFQETTKVLTEAAINSRTDHLRGLKENIIMGRLIPAGTGLTSYKRWKVSVHEDDDIGFVALPGMTSSVQPQG.

4 residues coordinate Zn(2+): cysteine 70, cysteine 72, cysteine 85, and cysteine 88. 3 residues coordinate Mg(2+): aspartate 460, aspartate 462, and aspartate 464. Cysteine 800, cysteine 874, cysteine 881, and cysteine 884 together coordinate Zn(2+).

This sequence belongs to the RNA polymerase beta' chain family. In terms of assembly, the RNAP catalytic core consists of 2 alpha, 1 beta, 1 beta' and 1 omega subunit. When a sigma factor is associated with the core the holoenzyme is formed, which can initiate transcription. Mg(2+) is required as a cofactor. Requires Zn(2+) as cofactor.

The catalysed reaction is RNA(n) + a ribonucleoside 5'-triphosphate = RNA(n+1) + diphosphate. Its function is as follows. DNA-dependent RNA polymerase catalyzes the transcription of DNA into RNA using the four ribonucleoside triphosphates as substrates. This Bdellovibrio bacteriovorus (strain ATCC 15356 / DSM 50701 / NCIMB 9529 / HD100) protein is DNA-directed RNA polymerase subunit beta'.